The primary structure comprises 198 residues: DnaJ homolog subfamily C member 5 (198 aa).

Residues Ser-8, Ser-10, Ser-12, and Ser-15 each carry the phosphoserine modification. The region spanning 13-82 is the J domain; that stretch reads GESLYHVLGL…RNIYDKYGSL (70 aa). Tyr-17 carries the phosphotyrosine modification. An N6-acetyllysine modification is found at Lys-56. Ser-151 bears the Phosphoserine mark.

Homodimer. Interacts with the chaperone complex consisting of HSC70 and SGTA. Interacts with ZDHHC13 (via ANK repeats). Interacts with ZDHHC17 (via ANK repeats). Interacts with SYT1, SYT5 and SYT7, and with SYT9, forming a complex with SNAP25. The interaction with SYT9 is stimulated tenfold in presence of calcium. In terms of processing, formation of the chaperone complex DNAJC5/HSC70 is not regulated by phosphorylation. Ser-10 phosphorylation induces an order-to-disorder transition triggering the interaction with Lys-58. This conformational switch modulates DNAJC5's cellular functions by reducing binding to syntaxin and synaptogamin without altering HSC70 interactions. Palmitoylated. Could be palmitoylated by DHHC3, DHHC7, DHHC15 and DHHC17. Palmitoylation occurs probably in the cysteine-rich domain and regulates DNAJC5 membrane attachment.

The protein localises to the cytoplasm. It localises to the cytosol. It is found in the membrane. Its subcellular location is the cytoplasmic vesicle. The protein resides in the secretory vesicle. The protein localises to the chromaffin granule membrane. It localises to the melanosome. It is found in the cell membrane. Acts as a co-chaperone for the SNARE protein SNAP-25. Involved in the calcium-mediated control of a late stage of exocytosis. Acts as a general chaperone in regulated exocytosis. May have an important role in presynaptic function. May be involved in calcium-dependent neurotransmitter release at nerve endings. This chain is DnaJ homolog subfamily C member 5, found in Mus musculus (Mouse).